Reading from the N-terminus, the 889-residue chain is MDTKTQIIDYDGNIMEDLKEWMIRNKLANLGFNYNVIAILGSQSSGKSTLLNNLFKTSFDVMNTKLGHSQTTQGLWLSFDTFEDSSAGPSEQGSTTRKVNPTLILDVEGNDSKERGDNRLTFEHRSALFSLALADCVIVNLWYHSLGNFTASNYGLLKTVMEVNLELFQQDENCPKTILLFTVRDWFEEFASIDIVKNKIVEEYLNKIWTEMKKPPEAEKVNISNYFIVEVVGLSHGIIKKEEFLKDVENLRQKWINQLRPLQYSRNIPSDGFAHYCNNIWNTIVKQSQLDIPSQKEMLATFRCQEIKNNVISNASKVIKEKLAASSSQHSSTSIDEFKPWAEKEVVEKSLDEYFVDASRYTESICLKTSEELLDSLFIQLQTIVDNNLNFTQRVLAAKFANELNTMYSVCASDKNVFLFSKESNLQVRKDGKGGSSPSAGDKKDTKDTRSSQDKCIRLWSSFLLNADKLEYNTLCKFFEDYQKCNIEVKKRNKTHEFNYKPSLSILSTAICKDLNRIRNAQLTVLLDRTRATIKSRFKNMESLLITTKNPEEYWNHTLKIVKALQESINSNLTKCFINLKGGGAGPGSITTAGIIPNGGLYNDEDNTFHEDNLVEAHNSLSDNQTGHENDHYVEENLLNFHKIDVIKNKGKYISTVGEEIDKQVKNKNAIAELNSYYLDEIMDVLKSKLDEISDNLSSIIIQRFESVFNYDDAEQPRQWREISMAELKKIFRESKNYAFLIIDILQKNVQVEIIDDYLPNNFIKDEIVEKGKNKAKRKIQEMCRDAQYIQETGAKMSLKNVPLFFWVILLILGWNELLFFTRFFFRLNIILPLFLAAAVILSTLVFNGNMEVLSIINKAVFFLAKNSFGVYRQLQAMGGKAAQGAAAD.

The Cytoplasmic portion of the chain corresponds to 1–801; sequence MDTKTQIIDY…ETGAKMSLKN (801 aa). A GB1/RHD3-type G domain is found at 31 to 277; it reads GFNYNVIAIL…IPSDGFAHYC (247 aa). 41 to 48 serves as a coordination point for GTP; sequence GSQSSGKS. Residues 429-449 are disordered; the sequence is RKDGKGGSSPSAGDKKDTKDT. Residues 679 to 699 are a coiled coil; that stretch reads LDEIMDVLKSKLDEISDNLSS. Residues 802–822 form a helical membrane-spanning segment; that stretch reads VPLFFWVILLILGWNELLFFT. Residues 823–825 lie on the Lumenal side of the membrane; sequence RFF. The helical transmembrane segment at 826–846 threads the bilayer; the sequence is FRLNIILPLFLAAAVILSTLV. Topologically, residues 847-889 are cytoplasmic; that stretch reads FNGNMEVLSIINKAVFFLAKNSFGVYRQLQAMGGKAAQGAAAD.

This sequence belongs to the TRAFAC class dynamin-like GTPase superfamily. GB1/RHD3 GTPase family. RHD3 subfamily.

It localises to the endoplasmic reticulum membrane. Functionally, probable GTP-binding protein involved in generating and maintaining the structure of the tubular endoplasmic reticulum network. This is Protein SEY1 homolog from Plasmodium vivax (strain Salvador I).